A 121-amino-acid chain; its full sequence is Large ribosomal subunit protein bL12 (121 aa).

It belongs to the bacterial ribosomal protein bL12 family. As to quaternary structure, homodimer. Part of the ribosomal stalk of the 50S ribosomal subunit. Forms a multimeric L10(L12)X complex, where L10 forms an elongated spine to which 2 to 4 L12 dimers bind in a sequential fashion. Binds GTP-bound translation factors.

Forms part of the ribosomal stalk which helps the ribosome interact with GTP-bound translation factors. Is thus essential for accurate translation. The polypeptide is Large ribosomal subunit protein bL12 (Streptococcus equi subsp. equi (strain 4047)).